Here is a 456-residue protein sequence, read N- to C-terminus: tRNA-2-methylthio-N(6)-dimethylallyladenosine synthase (456 aa).

In terms of domain architecture, MTTase N-terminal spans 9 to 126 (KKLYIKTHGC…LPEMMETKKS (118 aa)). 6 residues coordinate [4Fe-4S] cluster: cysteine 18, cysteine 55, cysteine 89, cysteine 163, cysteine 167, and cysteine 170. One can recognise a Radical SAM core domain in the interval 149–381 (DADGVSAFVS…QDRITQQAMA (233 aa)). One can recognise a TRAM domain in the interval 384 to 448 (RRMVGNTERI…PNSLRGSLIA (65 aa)).

The protein belongs to the methylthiotransferase family. MiaB subfamily. In terms of assembly, monomer. [4Fe-4S] cluster is required as a cofactor.

The protein localises to the cytoplasm. The enzyme catalyses N(6)-dimethylallyladenosine(37) in tRNA + (sulfur carrier)-SH + AH2 + 2 S-adenosyl-L-methionine = 2-methylsulfanyl-N(6)-dimethylallyladenosine(37) in tRNA + (sulfur carrier)-H + 5'-deoxyadenosine + L-methionine + A + S-adenosyl-L-homocysteine + 2 H(+). Catalyzes the methylthiolation of N6-(dimethylallyl)adenosine (i(6)A), leading to the formation of 2-methylthio-N6-(dimethylallyl)adenosine (ms(2)i(6)A) at position 37 in tRNAs that read codons beginning with uridine. The sequence is that of tRNA-2-methylthio-N(6)-dimethylallyladenosine synthase from Cellvibrio japonicus (strain Ueda107) (Pseudomonas fluorescens subsp. cellulosa).